The chain runs to 347 residues: Cell shape-determining protein MreB (347 aa).

Residues 19 to 21 (TAN), 165 to 167 (GGT), 213 to 216 (ERIK), and 295 to 298 (GGAL) each bind ATP.

This sequence belongs to the FtsA/MreB family. In terms of assembly, forms polymers in the presence of ATP. Forms pairs of protofilaments that adopt an antiparallel arrangement and bind to lipids.

It localises to the cytoplasm. Functionally, forms membrane-associated dynamic filaments that are essential for cell shape determination. Acts by regulating cell wall synthesis and cell elongation, and thus cell shape. A feedback loop between cell geometry and MreB localization may maintain elongated cell shape by targeting cell wall growth to regions of negative cell wall curvature. Required for mid-cell peptidoglycan synthesis and cell division. Directs the localization of the cytosolic peptidoglycan precursor-synthesizing enzyme MurG. Also required for proper chromosome segregation. Directs the segregation of origin-proximal but not origin-distal loci. This is Cell shape-determining protein MreB from Caulobacter vibrioides (strain NA1000 / CB15N) (Caulobacter crescentus).